A 1093-amino-acid polypeptide reads, in one-letter code: Probable phosphorylase b kinase regulatory subunit beta (1093 aa).

The disordered stretch occupies residues 1–27 (MRDVPKSLGLSVTTPGGSSGAPDSGRH). Calmodulin-binding regions lie at residues 6-27 (KSLG…SGRH), 751-778 (QLYH…IVDS), and 905-936 (EKLT…ILQR). Residue C1090 is the site of S-farnesyl cysteine attachment.

This sequence belongs to the phosphorylase b kinase regulatory chain family. Post-translationally, although the final Cys may be farnesylated, the terminal tripeptide is probably not removed, and the C-terminus is not methylated.

The protein resides in the cell membrane. The protein operates within glycan biosynthesis; glycogen metabolism. In terms of biological role, phosphorylase b kinase catalyzes the phosphorylation of serine in certain substrates, including troponin I. The beta chain acts as a regulatory unit and modulates the activity of the holoenzyme in response to phosphorylation. The protein is Probable phosphorylase b kinase regulatory subunit beta of Drosophila melanogaster (Fruit fly).